We begin with the raw amino-acid sequence, 443 residues long: tRNA modification GTPase MnmE (443 aa).

Residues R23, E82, and K121 each coordinate (6S)-5-formyl-5,6,7,8-tetrahydrofolate. Residues 215–364 form the TrmE-type G domain; that stretch reads GTSIVLAGHP…LKQFIQKWIQ (150 aa). N225 lines the K(+) pocket. GTP contacts are provided by residues 225-230, 244-250, and 269-272; these read NAGKSS, TDIPGTT, and DSAG. S229 provides a ligand contact to Mg(2+). Residues T244, I246, and T249 each contribute to the K(+) site. T250 lines the Mg(2+) pocket. K443 is a binding site for (6S)-5-formyl-5,6,7,8-tetrahydrofolate.

This sequence belongs to the TRAFAC class TrmE-Era-EngA-EngB-Septin-like GTPase superfamily. TrmE GTPase family. Homodimer. Heterotetramer of two MnmE and two MnmG subunits. Requires K(+) as cofactor.

The protein resides in the cytoplasm. In terms of biological role, exhibits a very high intrinsic GTPase hydrolysis rate. Involved in the addition of a carboxymethylaminomethyl (cmnm) group at the wobble position (U34) of certain tRNAs, forming tRNA-cmnm(5)s(2)U34. This is tRNA modification GTPase MnmE from Chlamydia felis (strain Fe/C-56) (Chlamydophila felis).